The following is a 320-amino-acid chain: Nuclease (320 aa).

His155 functions as the Proton acceptor in the catalytic mechanism. Residue Asn187 coordinates Mg(2+). A glycan (N-linked (GlcNAc...) asparagine) is linked at Asn204. Cys312 and Cys317 are oxidised to a cystine.

It belongs to the DNA/RNA non-specific endonuclease family. Homodimer; as a result of non-covalent interactions and not through the disulfide linkages between the two monomers. It depends on Mg(2+) as a cofactor. Mn(2+) serves as cofactor. Post-translationally, glycosylated.

It localises to the secreted. This enzyme has both RNase and DNase activity. This chain is Nuclease, found in Syncephalastrum racemosum (Filamentous fungus).